The chain runs to 394 residues: 1-deoxy-D-xylulose 5-phosphate reductoisomerase (394 aa).

NADPH is bound by residues T6, G7, S8, I9, A32, and N124. K125 is a 1-deoxy-D-xylulose 5-phosphate binding site. E126 is a binding site for NADPH. Residue D148 coordinates Mn(2+). Residues S149, E150, S174, and H197 each coordinate 1-deoxy-D-xylulose 5-phosphate. Mn(2+) is bound at residue E150. G203 serves as a coordination point for NADPH. Positions 210, 215, 216, and 219 each coordinate 1-deoxy-D-xylulose 5-phosphate. E219 is a binding site for Mn(2+).

Belongs to the DXR family. The cofactor is Mg(2+). Mn(2+) serves as cofactor.

It carries out the reaction 2-C-methyl-D-erythritol 4-phosphate + NADP(+) = 1-deoxy-D-xylulose 5-phosphate + NADPH + H(+). It functions in the pathway isoprenoid biosynthesis; isopentenyl diphosphate biosynthesis via DXP pathway; isopentenyl diphosphate from 1-deoxy-D-xylulose 5-phosphate: step 1/6. In terms of biological role, catalyzes the NADPH-dependent rearrangement and reduction of 1-deoxy-D-xylulose-5-phosphate (DXP) to 2-C-methyl-D-erythritol 4-phosphate (MEP). The sequence is that of 1-deoxy-D-xylulose 5-phosphate reductoisomerase from Streptomyces avermitilis (strain ATCC 31267 / DSM 46492 / JCM 5070 / NBRC 14893 / NCIMB 12804 / NRRL 8165 / MA-4680).